We begin with the raw amino-acid sequence, 662 residues long: Biosynthetic arginine decarboxylase (662 aa).

Lysine 126 bears the N6-(pyridoxal phosphate)lysine mark. Position 308 to 318 (308 to 318 (LNVGGGLGVDY)) interacts with substrate.

This sequence belongs to the Orn/Lys/Arg decarboxylase class-II family. SpeA subfamily. Requires Mg(2+) as cofactor. It depends on pyridoxal 5'-phosphate as a cofactor.

It catalyses the reaction L-arginine + H(+) = agmatine + CO2. Functionally, catalyzes the biosynthesis of agmatine from arginine. This Deinococcus radiodurans (strain ATCC 13939 / DSM 20539 / JCM 16871 / CCUG 27074 / LMG 4051 / NBRC 15346 / NCIMB 9279 / VKM B-1422 / R1) protein is Biosynthetic arginine decarboxylase.